The primary structure comprises 279 residues: Urease accessory protein UreD (279 aa).

It belongs to the UreD family. As to quaternary structure, ureD, UreF and UreG form a complex that acts as a GTP-hydrolysis-dependent molecular chaperone, activating the urease apoprotein by helping to assemble the nickel containing metallocenter of UreC. The UreE protein probably delivers the nickel.

Its subcellular location is the cytoplasm. Functionally, required for maturation of urease via the functional incorporation of the urease nickel metallocenter. This chain is Urease accessory protein UreD, found in Paracoccus denitrificans (strain Pd 1222).